Here is a 336-residue protein sequence, read N- to C-terminus: Nucleoid-associated protein Spro_3255 (336 aa).

The protein belongs to the YejK family.

The protein localises to the cytoplasm. It is found in the nucleoid. The sequence is that of Nucleoid-associated protein Spro_3255 from Serratia proteamaculans (strain 568).